Reading from the N-terminus, the 409-residue chain is FADH(2)-dependent resorcinol hydroxylase, oxygenase component (409 aa).

This sequence belongs to the HpaH/HsaA monooxygenase family. The FADH(2)-dependent resorcinol hydroxylase is composed of two subunits, GraA (the oxygenase component) and GraD (the reductase component). Both subunits are required for activity.

The enzyme catalyses resorcinol + FADH2 + O2 = benzene-1,2,4-triol + FAD + H2O + H(+). It functions in the pathway aromatic compound metabolism. In terms of biological role, involved in the gamma-resorcylate (2,6-dihydroxybenzoate) catabolism. Oxygenase component of the resorcinol hydroxylase, which catalyzes the FADH(2)-dependent conversion of resorcinol to hydroxyquinol. The polypeptide is FADH(2)-dependent resorcinol hydroxylase, oxygenase component (Rhizobium sp. (strain MTP-10005)).